We begin with the raw amino-acid sequence, 271 residues long: Octanoyltransferase LipM (271 aa).

Residues 31–242 (GHNKPTLRFY…GLAEQFNVEF (212 aa)) form the BPL/LPL catalytic domain. C144 serves as the catalytic Acyl-thioester intermediate.

It belongs to the octanoyltransferase LipM family. Monomer.

It catalyses the reaction octanoyl-[ACP] + L-lysyl-[protein] = N(6)-octanoyl-L-lysyl-[protein] + holo-[ACP] + H(+). It functions in the pathway protein modification; protein lipoylation via endogenous pathway; protein N(6)-(lipoyl)lysine from octanoyl-[acyl-carrier-protein]. Functionally, catalyzes the transfer of endogenously produced octanoic acid from octanoyl-acyl-carrier-protein onto the lipoyl domain of GcvH, an intermediate carrier during protein lipoylation. The polypeptide is Octanoyltransferase LipM (Clostridioides difficile (strain 630) (Peptoclostridium difficile)).